The following is a 110-amino-acid chain: DNA-directed RNA polymerase subunit omega (110 aa).

It belongs to the RNA polymerase subunit omega family. The RNAP catalytic core consists of 2 alpha, 1 beta, 1 beta' and 1 omega subunit. When a sigma factor is associated with the core the holoenzyme is formed, which can initiate transcription.

It carries out the reaction RNA(n) + a ribonucleoside 5'-triphosphate = RNA(n+1) + diphosphate. Functionally, promotes RNA polymerase assembly. Latches the N- and C-terminal regions of the beta' subunit thereby facilitating its interaction with the beta and alpha subunits. The protein is DNA-directed RNA polymerase subunit omega of Vesicomyosocius okutanii subsp. Calyptogena okutanii (strain HA).